The primary structure comprises 926 residues: DNA topoisomerase 3-alpha (926 aa).

Residues 10-154 (TVLNVAEKPS…NLFIRRAHFS (145 aa)) form the Toprim domain. 3 residues coordinate Mg(2+): Glu-16, Asp-123, and Asp-125. Residues 172–604 (NQLFAEAVDA…CLQQMKACFL (433 aa)) form the Topo IA-type catalytic domain. The interval 219–224 (SYGPCQ) is interaction with DNA. Tyr-342 functions as the O-(5'-phospho-DNA)-tyrosine intermediate in the catalytic mechanism. The C4-type zinc-finger motif lies at 642 to 670 (CNLCNESDMALRKNRDGNFMVGCMNYPQC). Disordered stretches follow at residues 740 to 760 (SRSQ…QGSN) and 775 to 806 (HAST…TVSC). Residues 750-760 (TAPSNNIQGSN) are compositionally biased toward polar residues. The segment at 767-782 (CIHCQQRGHASTNCPS) adopts a CCHC-type 1 zinc-finger fold. Positions 806, 809, 831, and 836 each coordinate Zn(2+). A GRF-type zinc finger spans residues 806–845 (CNTCGSQCVLRTANTEANRGRQFFSCPTQGCSFFAWEDSI). The disordered stretch occupies residues 849-890 (SGNATTGSNSGGSGRRGSRGRGRGGRGGQSSGGRRGSGTSFV). A compositionally biased stretch (gly residues) spans 873–884 (GRGGQSSGGRRG). A CCHC-type 2 zinc finger spans residues 901 to 917 (RCFSCGDPSHFANACPN).

It belongs to the type IA topoisomerase family. Component of the RMI complex, containing at least TOP3A and RMI1. The RMI complex interacts with RECQL4A. It depends on Mg(2+) as a cofactor.

The catalysed reaction is ATP-independent breakage of single-stranded DNA, followed by passage and rejoining.. In terms of biological role, releases the supercoiling and torsional tension of DNA introduced during the DNA replication and transcription by transiently cleaving and rejoining one strand of the DNA duplex. Introduces a single-strand break via transesterification at a target site in duplex DNA. The scissile phosphodiester is attacked by the catalytic tyrosine of the enzyme, resulting in the formation of a DNA-(5'-phosphotyrosyl)-enzyme intermediate and the expulsion of a 3'-OH DNA strand. The free DNA strand then undergoes passage around the unbroken strand thus removing DNA supercoils. Finally, in the religation step, the DNA 3'-OH attacks the covalent intermediate to expel the active-site tyrosine and restore the DNA phosphodiester backbone. Essential component of the RMI complex, a complex that plays an important role in the resolution step of homologous recombination, in a process called Holliday Junction dissolution, to limit DNA crossover formation in cells. Together with RMI1, is essential for the resolution of meiotic recombination intermediates, a step that prevents entanglement of the parental chromosomes. May have DNA decatenation activity. This chain is DNA topoisomerase 3-alpha (TOP3A), found in Arabidopsis thaliana (Mouse-ear cress).